We begin with the raw amino-acid sequence, 172 residues long: MAGVNNRVKVTNDIELKDRLVAINRVTKVTKGGRTFSFSAIVVVGNEEGIIGWGLGKAGEVTAAIAKGVESAKKNLVKVPVLKGTVPHEQSAKFGGAEVFIKPASHGTGVVAGGAMRAVLESVGITDVLAKSKGSSNPHNLVKATIEALSEMRDARMIAQNRGISVEKVFRG.

In terms of domain architecture, S5 DRBM spans 16–79 (LKDRLVAINR…ESAKKNLVKV (64 aa)).

Belongs to the universal ribosomal protein uS5 family. Part of the 30S ribosomal subunit. Contacts proteins S4 and S8.

Its function is as follows. With S4 and S12 plays an important role in translational accuracy. In terms of biological role, located at the back of the 30S subunit body where it stabilizes the conformation of the head with respect to the body. This chain is Small ribosomal subunit protein uS5, found in Bacteroides thetaiotaomicron (strain ATCC 29148 / DSM 2079 / JCM 5827 / CCUG 10774 / NCTC 10582 / VPI-5482 / E50).